The primary structure comprises 255 residues: Acetyl-coenzyme A carboxylase carboxyl transferase subunit alpha (255 aa).

The region spanning 1 to 235 is the CoA carboxyltransferase C-terminal domain; it reads MNIAKIVREA…KKELQTELAR (235 aa).

This sequence belongs to the AccA family. In terms of assembly, acetyl-CoA carboxylase is a heterohexamer composed of biotin carboxyl carrier protein (AccB), biotin carboxylase (AccC) and two subunits each of ACCase subunit alpha (AccA) and ACCase subunit beta (AccD).

The protein localises to the cytoplasm. It catalyses the reaction N(6)-carboxybiotinyl-L-lysyl-[protein] + acetyl-CoA = N(6)-biotinyl-L-lysyl-[protein] + malonyl-CoA. It participates in lipid metabolism; malonyl-CoA biosynthesis; malonyl-CoA from acetyl-CoA: step 1/1. Its function is as follows. Component of the acetyl coenzyme A carboxylase (ACC) complex. First, biotin carboxylase catalyzes the carboxylation of biotin on its carrier protein (BCCP) and then the CO(2) group is transferred by the carboxyltransferase to acetyl-CoA to form malonyl-CoA. In Streptococcus pneumoniae serotype 2 (strain D39 / NCTC 7466), this protein is Acetyl-coenzyme A carboxylase carboxyl transferase subunit alpha.